The sequence spans 374 residues: Dual-specificity RNA methyltransferase RlmN (374 aa).

The active-site Proton acceptor is the Glu94. Residues 100–339 (EEDRATLCVS…VTIRKTRGDD (240 aa)) enclose the Radical SAM core domain. Residues Cys107 and Cys344 are joined by a disulfide bond. Cys114, Cys118, and Cys121 together coordinate [4Fe-4S] cluster. Residues 168–169 (GE), Ser200, 222–224 (SLH), and Asn301 each bind S-adenosyl-L-methionine. Cys344 acts as the S-methylcysteine intermediate in catalysis.

Belongs to the radical SAM superfamily. RlmN family. [4Fe-4S] cluster is required as a cofactor.

It is found in the cytoplasm. The catalysed reaction is adenosine(2503) in 23S rRNA + 2 reduced [2Fe-2S]-[ferredoxin] + 2 S-adenosyl-L-methionine = 2-methyladenosine(2503) in 23S rRNA + 5'-deoxyadenosine + L-methionine + 2 oxidized [2Fe-2S]-[ferredoxin] + S-adenosyl-L-homocysteine. The enzyme catalyses adenosine(37) in tRNA + 2 reduced [2Fe-2S]-[ferredoxin] + 2 S-adenosyl-L-methionine = 2-methyladenosine(37) in tRNA + 5'-deoxyadenosine + L-methionine + 2 oxidized [2Fe-2S]-[ferredoxin] + S-adenosyl-L-homocysteine. Specifically methylates position 2 of adenine 2503 in 23S rRNA and position 2 of adenine 37 in tRNAs. m2A2503 modification seems to play a crucial role in the proofreading step occurring at the peptidyl transferase center and thus would serve to optimize ribosomal fidelity. This Vibrio vulnificus (strain CMCP6) protein is Dual-specificity RNA methyltransferase RlmN.